The chain runs to 604 residues: Choline transporter-like protein 3 (604 aa).

Asn-90 and Asn-103 each carry an N-linked (GlcNAc...) asparagine glycan. 5 helical membrane passes run 165–185 (DTIL…LFTF), 195–215 (IIIS…WWLY), 237–257 (LAFA…IFTL), 286–306 (LWTF…LLSL), and 330–350 (YLWW…LTCQ). 2 N-linked (GlcNAc...) asparagine glycosylation sites follow: Asn-454 and Asn-472. The next 2 helical transmembrane spans lie at 485–505 (FIIF…GLMA) and 514–534 (VWAI…HSFL). Positions 581–592 (NARSQGHKNSLP) are enriched in polar residues. A disordered region spans residues 581–604 (NARSQGHKNSLPNEEGTELRPIVR).

The protein belongs to the CTL (choline transporter-like) family. As to expression, expressed in colon, kidney and ileum.

It localises to the membrane. The chain is Choline transporter-like protein 3 (Slc44a3) from Rattus norvegicus (Rat).